A 400-amino-acid chain; its full sequence is Phosphoglycerate kinase (400 aa).

Substrate-binding positions include 24–26, arginine 40, 63–66, arginine 121, and arginine 154; these read DFN and HFGR. Residues lysine 205, glycine 296, glutamate 327, and 356 to 359 contribute to the ATP site; that span reads GGDS.

Monomer.

It is found in the cytoplasm. The enzyme catalyses (2R)-3-phosphoglycerate + ATP = (2R)-3-phospho-glyceroyl phosphate + ADP. It functions in the pathway carbohydrate degradation; glycolysis; pyruvate from D-glyceraldehyde 3-phosphate: step 2/5. The polypeptide is Phosphoglycerate kinase (Nostoc sp. (strain PCC 7120 / SAG 25.82 / UTEX 2576)).